We begin with the raw amino-acid sequence, 195 residues long: Imidazoleglycerol-phosphate dehydratase (195 aa).

Belongs to the imidazoleglycerol-phosphate dehydratase family.

It localises to the cytoplasm. The enzyme catalyses D-erythro-1-(imidazol-4-yl)glycerol 3-phosphate = 3-(imidazol-4-yl)-2-oxopropyl phosphate + H2O. The protein operates within amino-acid biosynthesis; L-histidine biosynthesis; L-histidine from 5-phospho-alpha-D-ribose 1-diphosphate: step 6/9. The polypeptide is Imidazoleglycerol-phosphate dehydratase (Beijerinckia indica subsp. indica (strain ATCC 9039 / DSM 1715 / NCIMB 8712)).